Reading from the N-terminus, the 338-residue chain is Phosphatidate cytidylyltransferase, mitochondrial (338 aa).

This sequence belongs to the TAM41 family. It depends on Mg(2+) as a cofactor.

The protein localises to the mitochondrion inner membrane. It catalyses the reaction a 1,2-diacyl-sn-glycero-3-phosphate + CTP + H(+) = a CDP-1,2-diacyl-sn-glycerol + diphosphate. Its pathway is phospholipid metabolism; CDP-diacylglycerol biosynthesis; CDP-diacylglycerol from sn-glycerol 3-phosphate: step 3/3. In terms of biological role, catalyzes the conversion of phosphatidic acid (PA) to CDP-diacylglycerol (CDP-DAG), an essential intermediate in the synthesis of phosphatidylglycerol, cardiolipin and phosphatidylinositol. This Xenopus laevis (African clawed frog) protein is Phosphatidate cytidylyltransferase, mitochondrial (tamm41).